Here is a 159-residue protein sequence, read N- to C-terminus: Phosphopantetheine adenylyltransferase (159 aa).

ATP is bound at residue histidine 16. Residues lysine 40, methionine 72, and arginine 86 each contribute to the substrate site. Residues 87 to 89, glutamate 97, and 122 to 128 each bind ATP; these read GLR and YQYLSAS.

This sequence belongs to the bacterial CoaD family. Homohexamer. Requires Mg(2+) as cofactor.

It is found in the cytoplasm. The enzyme catalyses (R)-4'-phosphopantetheine + ATP + H(+) = 3'-dephospho-CoA + diphosphate. It participates in cofactor biosynthesis; coenzyme A biosynthesis; CoA from (R)-pantothenate: step 4/5. In terms of biological role, reversibly transfers an adenylyl group from ATP to 4'-phosphopantetheine, yielding dephospho-CoA (dPCoA) and pyrophosphate. This Dehalococcoides mccartyi (strain ATCC BAA-2266 / KCTC 15142 / 195) (Dehalococcoides ethenogenes (strain 195)) protein is Phosphopantetheine adenylyltransferase.